A 707-amino-acid chain; its full sequence is Nucleolin 2 (707 aa).

The segment at 1-446 is disordered; sequence MGKSSKKSAV…TPASNQNQAT (446 aa). 2 stretches are compositionally biased toward basic and acidic residues: residues 30 to 40 and 47 to 60; these read RNAEDEIEKAV and TVRE…EEAK. 3 stretches are compositionally biased toward acidic residues: residues 75–85, 108–120, and 144–153; these read SSEEDSSESEE, SSDD…SSDD, and DSSDESLSDD. A compositionally biased stretch (low complexity) spans 158 to 170; that stretch reads KPAAPLKKPVALA. 3 stretches are compositionally biased toward acidic residues: residues 219 to 232, 248 to 263, and 271 to 287; these read DSSD…SDED, SESS…DDEA, and ESSD…SDSD. Basic and acidic residues predominate over residues 300 to 311; that stretch reads LTKDTKKGQSKD. The span at 312 to 326 shows a compositional bias: acidic residues; sequence ESEDSSDESSEESGD. Low complexity predominate over residues 336 to 347; that stretch reads STTSGTTKPSPK. Residues 355–370 are compositionally biased toward acidic residues; the sequence is SDDESDEDDSSDESSD. Positions 376 to 394 are enriched in low complexity; the sequence is KQTQAKKQAPVAQESSSSD. A compositionally biased stretch (acidic residues) spans 395 to 406; it reads ESSEEDSDMESD. Residues 407-417 show a composition bias toward basic and acidic residues; it reads EPAKTPQKKET. The segment covering 420-429 has biased composition (polar residues); sequence SVGSNKSATK. An RRM 1 domain is found at 449–525; sequence KTLFVGNLPY…RPVRLDLARE (77 aa). Disordered stretches follow at residues 527–546 and 629–707; these read GAYT…PAQS and RPRP…GDDD. Residues 549-630 enclose the RRM 2 domain; the sequence is NTIFIKGFDT…YSLYVDEARP (82 aa). Over residues 657 to 681 the composition is skewed to basic and acidic residues; it reads GRGDGSRGRGDRGRGRGFGRGDRGH.

The protein resides in the nucleus. It localises to the nucleolus. Functionally, involved in pre-rRNA processing and ribosome assembly. The sequence is that of Nucleolin 2 from Oryza sativa subsp. japonica (Rice).